We begin with the raw amino-acid sequence, 91 residues long: Small ribosomal subunit protein bS16c (91 aa).

It belongs to the bacterial ribosomal protein bS16 family.

The protein resides in the plastid. It localises to the chloroplast. This chain is Small ribosomal subunit protein bS16c, found in Vitis vinifera (Grape).